A 448-amino-acid chain; its full sequence is tRNA modification GTPase MnmE (448 aa).

3 residues coordinate (6S)-5-formyl-5,6,7,8-tetrahydrofolate: R24, E81, and K120. Positions 216-373 (GLNVVLVGAP…LKRTLLCEAG (158 aa)) constitute a TrmE-type G domain. N226 lines the K(+) pocket. GTP contacts are provided by residues 226-231 (NVGKSS), 245-251 (TDIAGTT), and 270-273 (DTAG). S230 provides a ligand contact to Mg(2+). The K(+) site is built by T245, I247, and T250. T251 is a binding site for Mg(2+). K448 lines the (6S)-5-formyl-5,6,7,8-tetrahydrofolate pocket.

It belongs to the TRAFAC class TrmE-Era-EngA-EngB-Septin-like GTPase superfamily. TrmE GTPase family. Homodimer. Heterotetramer of two MnmE and two MnmG subunits. K(+) is required as a cofactor.

It is found in the cytoplasm. Exhibits a very high intrinsic GTPase hydrolysis rate. Involved in the addition of a carboxymethylaminomethyl (cmnm) group at the wobble position (U34) of certain tRNAs, forming tRNA-cmnm(5)s(2)U34. The sequence is that of tRNA modification GTPase MnmE from Neisseria gonorrhoeae (strain ATCC 700825 / FA 1090).